We begin with the raw amino-acid sequence, 290 residues long: S-methyl-5'-thioadenosine phosphorylase 2 (290 aa).

Phosphate is bound by residues Ser14, 57–58 (RH), and 90–91 (SA). A substrate-binding site is contributed by Met185. Ser186 contributes to the phosphate binding site. 209–211 (DYD) lines the substrate pocket.

The protein belongs to the PNP/MTAP phosphorylase family. MTAP subfamily. As to quaternary structure, homotrimer.

It is found in the cytoplasm. The protein resides in the nucleus. The catalysed reaction is S-methyl-5'-thioadenosine + phosphate = 5-(methylsulfanyl)-alpha-D-ribose 1-phosphate + adenine. Its pathway is amino-acid biosynthesis; L-methionine biosynthesis via salvage pathway; S-methyl-5-thio-alpha-D-ribose 1-phosphate from S-methyl-5'-thioadenosine (phosphorylase route): step 1/1. Catalyzes the reversible phosphorylation of S-methyl-5'-thioadenosine (MTA) to adenine and 5-methylthioribose-1-phosphate. Involved in the breakdown of MTA, a major by-product of polyamine biosynthesis. Responsible for the first step in the methionine salvage pathway after MTA has been generated from S-adenosylmethionine. Has broad substrate specificity with 6-aminopurine nucleosides as preferred substrates. This Puccinia graminis f. sp. tritici (strain CRL 75-36-700-3 / race SCCL) (Black stem rust fungus) protein is S-methyl-5'-thioadenosine phosphorylase 2.